Here is a 654-residue protein sequence, read N- to C-terminus: Acetyl-coenzyme A synthetase (654 aa).

CoA is bound by residues 190–193 and threonine 313; that span reads RGGK. Residues 389–391, 413–418, aspartate 504, and arginine 519 contribute to the ATP site; these read GEP and DTWWQT. Serine 527 is a binding site for CoA. Arginine 530 contacts ATP. 2 residues coordinate Mg(2+): valine 541 and valine 546. An N6-acetyllysine modification is found at lysine 613.

Belongs to the ATP-dependent AMP-binding enzyme family. Requires Mg(2+) as cofactor. Post-translationally, acetylated. Deacetylation by the SIR2-homolog deacetylase activates the enzyme.

It carries out the reaction acetate + ATP + CoA = acetyl-CoA + AMP + diphosphate. In terms of biological role, catalyzes the conversion of acetate into acetyl-CoA (AcCoA), an essential intermediate at the junction of anabolic and catabolic pathways. AcsA undergoes a two-step reaction. In the first half reaction, AcsA combines acetate with ATP to form acetyl-adenylate (AcAMP) intermediate. In the second half reaction, it can then transfer the acetyl group from AcAMP to the sulfhydryl group of CoA, forming the product AcCoA. The protein is Acetyl-coenzyme A synthetase of Leptospira borgpetersenii serovar Hardjo-bovis (strain JB197).